The sequence spans 455 residues: Virion host shutoff protein (455 aa).

It belongs to the herpesviridae VHS protein family.

It is found in the virion. Functionally, minor structural protein that acts as an endoribonuclease during lytic infection. Degrades host mRNAs in the cytoplasm by cutting them at preferred sites, including some in regions of translation initiation. This Homo sapiens (Human) protein is Virion host shutoff protein (17).